Reading from the N-terminus, the 132-residue chain is Phosphoribosyl-AMP cyclohydrolase (132 aa).

Asp-82 contacts Mg(2+). Cys-83 serves as a coordination point for Zn(2+). 2 residues coordinate Mg(2+): Asp-84 and Asp-86. Positions 100 and 107 each coordinate Zn(2+).

The protein belongs to the PRA-CH family. In terms of assembly, homodimer. It depends on Mg(2+) as a cofactor. Requires Zn(2+) as cofactor.

The protein resides in the cytoplasm. It catalyses the reaction 1-(5-phospho-beta-D-ribosyl)-5'-AMP + H2O = 1-(5-phospho-beta-D-ribosyl)-5-[(5-phospho-beta-D-ribosylamino)methylideneamino]imidazole-4-carboxamide. The protein operates within amino-acid biosynthesis; L-histidine biosynthesis; L-histidine from 5-phospho-alpha-D-ribose 1-diphosphate: step 3/9. Functionally, catalyzes the hydrolysis of the adenine ring of phosphoribosyl-AMP. This chain is Phosphoribosyl-AMP cyclohydrolase, found in Dechloromonas aromatica (strain RCB).